The chain runs to 134 residues: GSH-induced LITAF domain protein (134 aa).

The 81-residue stretch at 33–113 folds into the LITAF domain; that stretch reads DPLGAPIQQT…CGNKVADFEK (81 aa). Zn(2+)-binding residues include cysteine 53 and cysteine 56. Residues 68-88 are membrane-binding amphipathic helix; the sequence is PGVAAVVACMMPFMLGFCFLC. Residues cysteine 101 and cysteine 104 each coordinate Zn(2+).

The protein belongs to the CDIP1/LITAF family. Interacts (via N- and C-terminal) with MIEL1 and LSD1 (via N-terminus).

It localises to the cell membrane. Functionally, acts as a membrane anchor, bringing other regulators of programmed cell death (PCD) to the plasma membrane. Negatively regulates hypersensitive cell death. The sequence is that of GSH-induced LITAF domain protein from Arabidopsis thaliana (Mouse-ear cress).